We begin with the raw amino-acid sequence, 97 residues long: Putative septation protein SpoVG (97 aa).

The protein belongs to the SpoVG family.

Functionally, essential for sporulation. Interferes with or is a negative regulator of the pathway leading to asymmetric septation. This Bacillus cereus (strain 03BB102) protein is Putative septation protein SpoVG.